A 275-amino-acid chain; its full sequence is Small ribosomal subunit protein uS2 (275 aa).

The disordered stretch occupies residues 226–275 (AAAPNSASVREEEFSAEAGDEGKGRRAPAKKATEKKADAPAAAPEAPAAE). The span at 264–275 (APAAAPEAPAAE) shows a compositional bias: low complexity.

The protein belongs to the universal ribosomal protein uS2 family.

The sequence is that of Small ribosomal subunit protein uS2 from Xanthomonas campestris pv. campestris (strain 8004).